The primary structure comprises 212 residues: 2-C-methyl-D-erythritol 4-phosphate cytidylyltransferase (212 aa).

This sequence belongs to the IspD/TarI cytidylyltransferase family. IspD subfamily.

It catalyses the reaction 2-C-methyl-D-erythritol 4-phosphate + CTP + H(+) = 4-CDP-2-C-methyl-D-erythritol + diphosphate. Its pathway is isoprenoid biosynthesis; isopentenyl diphosphate biosynthesis via DXP pathway; isopentenyl diphosphate from 1-deoxy-D-xylulose 5-phosphate: step 2/6. Functionally, catalyzes the formation of 4-diphosphocytidyl-2-C-methyl-D-erythritol from CTP and 2-C-methyl-D-erythritol 4-phosphate (MEP). This chain is 2-C-methyl-D-erythritol 4-phosphate cytidylyltransferase, found in Chlamydia caviae (strain ATCC VR-813 / DSM 19441 / 03DC25 / GPIC) (Chlamydophila caviae).